Here is a 515-residue protein sequence, read N- to C-terminus: Mucin-like protein Glc1.8a (515 aa).

An N-terminal signal peptide occupies residues 1–20 (MSQITLIILILAIGFSCTKS). Residues 21-467 (HPINSTRDGE…ANDIKKPAFP (447 aa)) are Extracellular-facing. N-linked (GlcNAc...) asparagine; by host glycosylation is found at N24, N45, N51, N60, N85, N93, N102, N123, N129, N138, N180, N201, N207, N216, N258, N279, N285, N319, N327, N336, N357, N363, N372, N397, N405, N413, N434, and N441. Residues 80–114 (SKKDENITGQSEINTSAKSQPINSTRDGEDSGTDL) are disordered. A compositionally biased stretch (polar residues) spans 86 to 104 (ITGQSEINTSAKSQPINST). The tract at residues 314–358 (SKKDENVTGQSEINTSAKSQPINSTRDGEDSGTDLKNLLTDPANT) is disordered. Over residues 320–338 (VTGQSEINTSAKSQPINST) the composition is skewed to polar residues. The disordered stretch occupies residues 393–413 (RKDENVTGQSEFNISTNSNLN). Residues 468-488 (YCIILITFQIVTVGMIIYLVF) form a helical membrane-spanning segment. Over 489–515 (RTMRKPCQSERAIPLNTFGFGNNSSHE) the chain is Cytoplasmic.

The protein belongs to the polydnaviridae Glc1.8 protein family.

The protein resides in the host membrane. Involved in suppression of the insect cellular immune response. Inhibits host hemocyte adhesion and phagocytosis. In Microplitis demolitor (Parasitoid wasp), this protein is Mucin-like protein Glc1.8a (O9).